Here is a 328-residue protein sequence, read N- to C-terminus: Trans-O-hydroxybenzylidenepyruvate hydratase-aldolase (328 aa).

The protein belongs to the DapA family. In terms of assembly, homotrimer.

The catalysed reaction is (3E)-4-(2-hydroxyphenyl)-2-oxobut-3-enoate + H2O = salicylaldehyde + pyruvate. It participates in aromatic compound metabolism; naphthalene degradation. Its activity is regulated as follows. Inhibited bye p-chloromercuribenzoate and salicylaldehyde. Activated by salicylate. Functionally, involved in the naphthalene and naphthalenesulfonate catabolic pathway. Catalyzes the transformation of trans-O-hydroxybenzylidenepyruvate (THBPA) to salicylaldehyde and pyruvate. The reaction is reversible. Can also use 2,4-dihydroxybenzalpyruvate (2,4-DHBP) and 2,6-dihydroxybenzalpyruvate (2,6-DHBP). The polypeptide is Trans-O-hydroxybenzylidenepyruvate hydratase-aldolase (nsaE) (Sphingobium xenophagum).